We begin with the raw amino-acid sequence, 278 residues long: Probable CCR4-associated factor 1 homolog 5 (278 aa).

Positions 30, 32, 145, and 217 each coordinate a divalent metal cation.

This sequence belongs to the CAF1 family. As to quaternary structure, component of the CCR4-NOT complex, at least composed of CRR4 and CAF1 proteins. The cofactor is a divalent metal cation.

The protein resides in the nucleus. The protein localises to the cytoplasm. The enzyme catalyses Exonucleolytic cleavage of poly(A) to 5'-AMP.. Ubiquitous transcription factor required for a diverse set of processes. It is a component of the CCR4 complex involved in the control of gene expression. This Arabidopsis thaliana (Mouse-ear cress) protein is Probable CCR4-associated factor 1 homolog 5 (CAF1-5).